Reading from the N-terminus, the 394-residue chain is Succinate--CoA ligase [ADP-forming] subunit beta (394 aa).

ATP is bound by residues K46, 53 to 55 (GRG), E99, C102, and E107. Positions 199 and 213 each coordinate Mg(2+). Substrate contacts are provided by residues N264 and 321–323 (GIV).

This sequence belongs to the succinate/malate CoA ligase beta subunit family. Heterotetramer of two alpha and two beta subunits. Requires Mg(2+) as cofactor.

The catalysed reaction is succinate + ATP + CoA = succinyl-CoA + ADP + phosphate. The enzyme catalyses GTP + succinate + CoA = succinyl-CoA + GDP + phosphate. The protein operates within carbohydrate metabolism; tricarboxylic acid cycle; succinate from succinyl-CoA (ligase route): step 1/1. Succinyl-CoA synthetase functions in the citric acid cycle (TCA), coupling the hydrolysis of succinyl-CoA to the synthesis of either ATP or GTP and thus represents the only step of substrate-level phosphorylation in the TCA. The beta subunit provides nucleotide specificity of the enzyme and binds the substrate succinate, while the binding sites for coenzyme A and phosphate are found in the alpha subunit. This Haemophilus influenzae (strain PittGG) protein is Succinate--CoA ligase [ADP-forming] subunit beta.